Here is a 356-residue protein sequence, read N- to C-terminus: AT-hook motif nuclear-localized protein 1 (356 aa).

Residues 1–127 (MVLNMESTGE…PSHLPPPSSH (127 aa)) are disordered. The span at 49 to 66 (VTPPPPQPSSHHTAPPPL) shows a compositional bias: pro residues. Residues 88–97 (MKKKRGRPRK) are compositionally biased toward basic residues. The Bipartite nuclear localization signal motif lies at 89-97 (KKKRGRPRK). Residues 89–101 (KKKRGRPRKYGPD) constitute a DNA-binding region (a.T hook). Residues 106–118 (ALSPKPISSAPAP) are compositionally biased toward low complexity. Residues 167–309 (GGNFTPHIIT…KHDFMLSSPT (143 aa)) enclose the PPC domain. The segment at 270–287 (GLLVAASPVQVVVGSFLA) is required for nuclear localization. The Nuclear localization signal motif lies at 295-302 (KPKKNKHD).

The protein localises to the nucleus. It localises to the nucleoplasm. The protein resides in the chromosome. Functionally, transcription factor that specifically binds AT-rich DNA sequences related to the nuclear matrix attachment regions (MARs). May play a function in the positioning of chromatin fibers within the nucleus. This chain is AT-hook motif nuclear-localized protein 1, found in Arabidopsis thaliana (Mouse-ear cress).